The chain runs to 320 residues: Methionyl-tRNA formyltransferase (320 aa).

111 to 114 contributes to the (6S)-5,6,7,8-tetrahydrofolate binding site; that stretch reads SLLP.

This sequence belongs to the Fmt family.

The enzyme catalyses L-methionyl-tRNA(fMet) + (6R)-10-formyltetrahydrofolate = N-formyl-L-methionyl-tRNA(fMet) + (6S)-5,6,7,8-tetrahydrofolate + H(+). Its function is as follows. Attaches a formyl group to the free amino group of methionyl-tRNA(fMet). The formyl group appears to play a dual role in the initiator identity of N-formylmethionyl-tRNA by promoting its recognition by IF2 and preventing the misappropriation of this tRNA by the elongation apparatus. The protein is Methionyl-tRNA formyltransferase of Methylacidiphilum infernorum (isolate V4) (Methylokorus infernorum (strain V4)).